Here is a 185-residue protein sequence, read N- to C-terminus: Bcl-2-modifying factor (185 aa).

A disordered region spans residues 1–28 (MEPPQCVEELEDDVFQSEDGEPGTQPGG). Acidic residues predominate over residues 8-21 (EELEDDVFQSEDGE). The segment at 67–75 (DKATQTLSP) is interaction with DLC2. The short motif at 134 to 148 (IARKLQCIADQFHRL) is the BH3 element.

It belongs to the Bcl-2 family. In terms of assembly, interacts with MCL1, BCL2, BCL2L1/BCL-Xl, BCL2A1 and BCL2L2/BCL-w. Interacts with the myosin V actin motor complex through its binding to DLC2. As to expression, widely expressed with an abundant expression in pancreas, liver kidney and hematopoietic tissues.

May play a role in apoptosis. The chain is Bcl-2-modifying factor (Bmf) from Mus musculus (Mouse).